The chain runs to 451 residues: Phosphoglucosamine mutase (451 aa).

The Phosphoserine intermediate role is filled by serine 101. The Mg(2+) site is built by serine 101, aspartate 240, aspartate 242, and aspartate 244. Serine 101 carries the post-translational modification Phosphoserine.

The protein belongs to the phosphohexose mutase family. It depends on Mg(2+) as a cofactor. In terms of processing, activated by phosphorylation.

The catalysed reaction is alpha-D-glucosamine 1-phosphate = D-glucosamine 6-phosphate. Functionally, catalyzes the conversion of glucosamine-6-phosphate to glucosamine-1-phosphate. This chain is Phosphoglucosamine mutase, found in Streptococcus pyogenes serotype M18 (strain MGAS8232).